The following is a 485-amino-acid chain: MALLVEKTSSGREYKVKDMSQADFGRLEIELAEVEMPGLMSCRAEFGPSQPFKGAKITGSLHMTIQTAVLIETLTALGAEVRWCSCNIFSTQEHAAAAIARDSAAVFAWKGETLQEYWWCTERALDWGPDGGPDLIVDDGGDATLLIHEGVKAEEEYKKNGALPDPSSTDNAEFQIVLTIIRDGLKSDPTKYTRMKERLVGVSEETTTGVKRLYQMQANGTLLFPAINVNDSVTKSKFDNLYGCRHSLPDGLMRATDVMIAGKVAVVAGYGDVGKGCAAALKQAGARVIVTEIDPICALQATMEGLQVLTLEDVVSEADIFVTTTGNKDIIMVDHMRKMKNNAIVCNIGHFDNEIDMLGLETYPGVKRITIKPQTDRWVFPDTNSGIIVLAEGRLMNLGCATGHPSFVMSCSFTNQVIAQLELWNERKTGKYEKKVYVLPKHLDEKVAALHLGKLGAKLTKLTKDQADYISVPIEGPYKPAHYRY.

Residues threonine 64, aspartate 139, and glutamate 205 each coordinate substrate. Residue 206-208 coordinates NAD(+); the sequence is TTT. Residues lysine 235 and aspartate 239 each coordinate substrate. Residues asparagine 240, 269 to 274, glutamate 292, asparagine 327, 348 to 350, and asparagine 397 contribute to the NAD(+) site; these read GYGDVG and IGH.

The protein belongs to the adenosylhomocysteinase family. In terms of assembly, homotetramer. NAD(+) serves as cofactor.

The enzyme catalyses S-adenosyl-L-homocysteine + H2O = L-homocysteine + adenosine. It functions in the pathway amino-acid biosynthesis; L-homocysteine biosynthesis; L-homocysteine from S-adenosyl-L-homocysteine: step 1/1. Functionally, adenosylhomocysteine is a competitive inhibitor of S-adenosyl-L-methionine-dependent methyl transferase reactions; therefore adenosylhomocysteinase may play a key role in the control of methylations via regulation of the intracellular concentration of adenosylhomocysteine. This chain is Adenosylhomocysteinase (SAHH), found in Catharanthus roseus (Madagascar periwinkle).